The sequence spans 517 residues: Lysine--tRNA ligase (517 aa).

Residues M1–A21 form a disordered region. Over residues A7–P20 the composition is skewed to low complexity. Positions 427 and 434 each coordinate Mg(2+).

Belongs to the class-II aminoacyl-tRNA synthetase family. In terms of assembly, homodimer. Requires Mg(2+) as cofactor.

Its subcellular location is the cytoplasm. It catalyses the reaction tRNA(Lys) + L-lysine + ATP = L-lysyl-tRNA(Lys) + AMP + diphosphate. The chain is Lysine--tRNA ligase from Cupriavidus taiwanensis (strain DSM 17343 / BCRC 17206 / CCUG 44338 / CIP 107171 / LMG 19424 / R1) (Ralstonia taiwanensis (strain LMG 19424)).